A 474-amino-acid polypeptide reads, in one-letter code: MANQLRERHQSLKKKYRELIDGDPSLPPEKRKQANLAQLLRDSQDRNKHLGEEIKELQQRLGEVQGDNKLLRMTIAKQRLGDEAIGVRHFAAHEREDLVQQLERAKEQIESLEHDLQASVDELQDVKEERSSYQDKVERLNQELNHILSGHENRIIDVDALCMENRYLQERLKQLHEEVNLLKSNIAKYKNALERRKNSKGQGKSSSSALTGVLSAKQVQDLLSEDHGCSLPATPQSISDLKSLATALLETIHEKNMVIQHQRQTNKILGNRVAELEKKLRTLEVSGLWSLPGGKDTILFSDPTLPSGQRSRSPLLKFVEQPTENKADPKDGEAQKQEEDESCAAAEALTAPEDAGRPAVNSPANQSRGNQCKLFHPSLPQLPSEEEVNSLGREIIKLTKEQAAAELEEVRRESPIEGQRSETGPAPPGLAIQGELPKSHLDSFEASRPAAKASTPEDGKGIPEGGGMRSTVKT.

2 coiled-coil regions span residues 1–199 (MANQ…RKNS) and 259–286 (IQHQRQTNKILGNRVAELEKKLRTLEVS). 2 disordered regions span residues 301-388 (SDPT…EEEV) and 405-474 (AELE…TVKT). Residues 323–337 (TENKADPKDGEAQKQ) show a composition bias toward basic and acidic residues. Over residues 343–353 (CAAAEALTAPE) the composition is skewed to low complexity. Residues 385–414 (EEEVNSLGREIIKLTKEQAAAELEEVRRES) adopt a coiled-coil conformation.

This sequence belongs to the CCDC149 family.

This chain is Coiled-coil domain-containing protein 149 (CCDC149), found in Homo sapiens (Human).